A 108-amino-acid chain; its full sequence is ATP synthase peripheral stalk subunit F6, mitochondrial (108 aa).

Residues 1 to 32 (MILQRLFRLSSAVQSAISVSWRRNIGITAVAF) constitute a mitochondrion transit peptide. N6-acetyllysine occurs at positions 41, 46, and 79. K84 and K99 each carry N6-acetyllysine; alternate. Residues K84 and K99 each carry the N6-succinyllysine; alternate modification. K105 is modified (N6-acetyllysine). A Phosphoserine modification is found at S108.

The protein belongs to the eukaryotic ATPase subunit F6 family. In terms of assembly, component of the ATP synthase complex composed at least of ATP5F1A/subunit alpha, ATP5F1B/subunit beta, ATP5MC1/subunit c (homooctomer), MT-ATP6/subunit a, MT-ATP8/subunit 8, ATP5ME/subunit e, ATP5MF/subunit f, ATP5MG/subunit g, ATP5MK/subunit k, ATP5MJ/subunit j, ATP5F1C/subunit gamma, ATP5F1D/subunit delta, ATP5F1E/subunit epsilon, ATP5PF/subunit F6, ATP5PB/subunit b, ATP5PD/subunit d, ATP5PO/subunit OSCP. ATP synthase complex consists of a soluble F(1) head domain (subunits alpha(3) and beta(3)) - the catalytic core - and a membrane F(0) domain - the membrane proton channel (subunits c, a, 8, e, f, g, k and j). These two domains are linked by a central stalk (subunits gamma, delta, and epsilon) rotating inside the F1 region and a stationary peripheral stalk (subunits F6, b, d, and OSCP).

Its subcellular location is the mitochondrion. The protein localises to the mitochondrion inner membrane. Functionally, subunit F6, of the mitochondrial membrane ATP synthase complex (F(1)F(0) ATP synthase or Complex V) that produces ATP from ADP in the presence of a proton gradient across the membrane which is generated by electron transport complexes of the respiratory chain. ATP synthase complex consist of a soluble F(1) head domain - the catalytic core - and a membrane F(1) domain - the membrane proton channel. These two domains are linked by a central stalk rotating inside the F(1) region and a stationary peripheral stalk. During catalysis, ATP synthesis in the catalytic domain of F(1) is coupled via a rotary mechanism of the central stalk subunits to proton translocation. In vivo, can only synthesize ATP although its ATP hydrolase activity can be activated artificially in vitro. Part of the complex F(0) domain. Part of the complex F(0) domain and the peripheric stalk, which acts as a stator to hold the catalytic alpha(3)beta(3) subcomplex and subunit a/ATP6 static relative to the rotary elements. In Bos taurus (Bovine), this protein is ATP synthase peripheral stalk subunit F6, mitochondrial.